The chain runs to 343 residues: Holliday junction branch migration complex subunit RuvB (343 aa).

The large ATPase domain (RuvB-L) stretch occupies residues 1–181 (MDRIIDTAAT…FGIVQRLEFY (181 aa)). ATP contacts are provided by residues isoleucine 20, arginine 21, glycine 62, lysine 65, threonine 66, threonine 67, 128 to 130 (EDF), arginine 171, tyrosine 181, and arginine 218. Threonine 66 contacts Mg(2+). The interval 182–252 (SPEDLARIVR…VAQAAMQMLK (71 aa)) is small ATPAse domain (RuvB-S). A head domain (RuvB-H) region spans residues 255–343 (QGGFDELDRR…SAFTDPEDLF (89 aa)). DNA is bound by residues arginine 291, arginine 310, and arginine 315.

This sequence belongs to the RuvB family. As to quaternary structure, homohexamer. Forms an RuvA(8)-RuvB(12)-Holliday junction (HJ) complex. HJ DNA is sandwiched between 2 RuvA tetramers; dsDNA enters through RuvA and exits via RuvB. An RuvB hexamer assembles on each DNA strand where it exits the tetramer. Each RuvB hexamer is contacted by two RuvA subunits (via domain III) on 2 adjacent RuvB subunits; this complex drives branch migration. In the full resolvosome a probable DNA-RuvA(4)-RuvB(12)-RuvC(2) complex forms which resolves the HJ.

Its subcellular location is the cytoplasm. The enzyme catalyses ATP + H2O = ADP + phosphate + H(+). Its function is as follows. The RuvA-RuvB-RuvC complex processes Holliday junction (HJ) DNA during genetic recombination and DNA repair, while the RuvA-RuvB complex plays an important role in the rescue of blocked DNA replication forks via replication fork reversal (RFR). RuvA specifically binds to HJ cruciform DNA, conferring on it an open structure. The RuvB hexamer acts as an ATP-dependent pump, pulling dsDNA into and through the RuvAB complex. RuvB forms 2 homohexamers on either side of HJ DNA bound by 1 or 2 RuvA tetramers; 4 subunits per hexamer contact DNA at a time. Coordinated motions by a converter formed by DNA-disengaged RuvB subunits stimulates ATP hydrolysis and nucleotide exchange. Immobilization of the converter enables RuvB to convert the ATP-contained energy into a lever motion, pulling 2 nucleotides of DNA out of the RuvA tetramer per ATP hydrolyzed, thus driving DNA branch migration. The RuvB motors rotate together with the DNA substrate, which together with the progressing nucleotide cycle form the mechanistic basis for DNA recombination by continuous HJ branch migration. Branch migration allows RuvC to scan DNA until it finds its consensus sequence, where it cleaves and resolves cruciform DNA. This is Holliday junction branch migration complex subunit RuvB from Xylella fastidiosa (strain 9a5c).